The following is a 96-amino-acid chain: Putative pterin-4-alpha-carbinolamine dehydratase (96 aa).

It belongs to the pterin-4-alpha-carbinolamine dehydratase family.

The enzyme catalyses (4aS,6R)-4a-hydroxy-L-erythro-5,6,7,8-tetrahydrobiopterin = (6R)-L-erythro-6,7-dihydrobiopterin + H2O. This Prochlorococcus marinus (strain MIT 9515) protein is Putative pterin-4-alpha-carbinolamine dehydratase.